A 219-amino-acid chain; its full sequence is Mucosal pentraxin (219 aa).

Residues 1-19 form the signal peptide; that stretch reads MEKLIVGTLLLTVLSGGIS. In terms of domain architecture, Pentraxin (PTX) spans 24–219; sequence DGKAFIFPQE…YVVTKPKLWT (196 aa). A disulfide bond links C55 and C114. Ca(2+)-binding residues include D77, N78, E155, Q156, D157, and Q167.

Belongs to the pentraxin family. In terms of assembly, homopentamer. Pentraxin (or pentaxin) have a discoid arrangement of 5 non-covalently bound subunits. Requires Ca(2+) as cofactor. Expression is restricted to small intestine, stomach and colon. Within colon, expressed in epithelial cells located within the lower to mid region of transverse and distal crypts, but not in proximal colon.

The protein resides in the secreted. The chain is Mucosal pentraxin (Mptx1) from Rattus norvegicus (Rat).